We begin with the raw amino-acid sequence, 335 residues long: DNA-directed RNA polymerase subunit alpha (335 aa).

Residues 1–233 (MMLNATEFLT…QQISIFVDLE (233 aa)) are alpha N-terminal domain (alpha-NTD). The alpha C-terminal domain (alpha-CTD) stretch occupies residues 247-335 (VDPVLLRPVD…VDDRFSYRSR (89 aa)).

This sequence belongs to the RNA polymerase alpha chain family. In terms of assembly, homodimer. The RNAP catalytic core consists of 2 alpha, 1 beta, 1 beta' and 1 omega subunit. When a sigma factor is associated with the core the holoenzyme is formed, which can initiate transcription.

The catalysed reaction is RNA(n) + a ribonucleoside 5'-triphosphate = RNA(n+1) + diphosphate. Functionally, DNA-dependent RNA polymerase catalyzes the transcription of DNA into RNA using the four ribonucleoside triphosphates as substrates. The protein is DNA-directed RNA polymerase subunit alpha of Psychrobacter arcticus (strain DSM 17307 / VKM B-2377 / 273-4).